The chain runs to 108 residues: ATP synthase peripheral stalk subunit F6, mitochondrial (108 aa).

Residues M1 to F32 constitute a mitochondrion transit peptide. 3 positions are modified to N6-acetyllysine: K41, K46, and K79. Residues K84, K94, and K99 each carry the N6-acetyllysine; alternate modification. N6-succinyllysine; alternate is present on residues K84, K94, and K99. The residue at position 105 (K105) is an N6-acetyllysine.

The protein belongs to the eukaryotic ATPase subunit F6 family. Component of the ATP synthase complex composed at least of ATP5F1A/subunit alpha, ATP5F1B/subunit beta, ATP5MC1/subunit c (homooctomer), MT-ATP6/subunit a, MT-ATP8/subunit 8, ATP5ME/subunit e, ATP5MF/subunit f, ATP5MG/subunit g, ATP5MK/subunit k, ATP5MJ/subunit j, ATP5F1C/subunit gamma, ATP5F1D/subunit delta, ATP5F1E/subunit epsilon, ATP5PF/subunit F6, ATP5PB/subunit b, ATP5PD/subunit d, ATP5PO/subunit OSCP. ATP synthase complex consists of a soluble F(1) head domain (subunits alpha(3) and beta(3)) - the catalytic core - and a membrane F(0) domain - the membrane proton channel (subunits c, a, 8, e, f, g, k and j). These two domains are linked by a central stalk (subunits gamma, delta, and epsilon) rotating inside the F1 region and a stationary peripheral stalk (subunits F6, b, d, and OSCP).

The protein resides in the mitochondrion. It is found in the mitochondrion inner membrane. Subunit F6, of the mitochondrial membrane ATP synthase complex (F(1)F(0) ATP synthase or Complex V) that produces ATP from ADP in the presence of a proton gradient across the membrane which is generated by electron transport complexes of the respiratory chain. ATP synthase complex consist of a soluble F(1) head domain - the catalytic core - and a membrane F(1) domain - the membrane proton channel. These two domains are linked by a central stalk rotating inside the F(1) region and a stationary peripheral stalk. During catalysis, ATP synthesis in the catalytic domain of F(1) is coupled via a rotary mechanism of the central stalk subunits to proton translocation. In vivo, can only synthesize ATP although its ATP hydrolase activity can be activated artificially in vitro. Part of the complex F(0) domain. Part of the complex F(0) domain and the peripheric stalk, which acts as a stator to hold the catalytic alpha(3)beta(3) subcomplex and subunit a/ATP6 static relative to the rotary elements. The chain is ATP synthase peripheral stalk subunit F6, mitochondrial from Macaca fascicularis (Crab-eating macaque).